Reading from the N-terminus, the 793-residue chain is Protein smoothened (793 aa).

Residues 1–30 form the signal peptide; sequence MAAGRPVRGPELAPRRLLQLLLLVLLGGRG. Residues 31–237 lie on the Extracellular side of the membrane; the sequence is RGAALSGNVT…EAEHQDMHSY (207 aa). The interval 35–61 is disordered; it reads LSGNVTGPGPRSAGGSARRNAPVTSPP. N-linked (GlcNAc...) asparagine glycosylation occurs at N38. Cystine bridges form between C68-C182, C74-C138, C82-C131, C122-C158, and C151-C173. Residues 69–185 enclose the FZ domain; the sequence is GRAAHCEPLR…DHFPEGCPNE (117 aa). D99 is a cholesterol binding site. N-linked (GlcNAc...) asparagine glycosylation occurs at N192. Disulfide bonds link C197/C217, C221/C299, and C318/C394. The helical transmembrane segment at 238-258 threads the bilayer; sequence IAAFGAVTGLCTLFTLATFVA. Over 259-266 the chain is Cytoplasmic; that stretch reads DWRNSNRY. Residues 267–287 traverse the membrane as a helical segment; sequence PAVILFYVNACFFVGSIGWLA. Residues 288-318 are Extracellular-facing; that stretch reads QFMDGARREIVCRADGTMRFGEPTSSETLSC. Residues 319 to 339 form a helical membrane-spanning segment; it reads VIIFVIVYYALMAGVVWFVVL. Residues 340–362 are Cytoplasmic-facing; it reads TYAWHTSFKALGTTYQPLSGKTS. The helical transmembrane segment at 363-383 threads the bilayer; the sequence is YFHLLTWSLPFVLTVAILAVA. Residues 384–406 lie on the Extracellular side of the membrane; it reads QVDGDSVSGICFVGYKNYRYRAG. Y398 lines the cholesterol pocket. A helical membrane pass occupies residues 407 to 427; it reads FVLAPIGLVLIVGGYFLIRGV. At 428-455 the chain is on the cytoplasmic side; sequence MTLFSIKSNHPGLLSEKAASKINETMLR. A helical transmembrane segment spans residues 456-476; it reads LGIFGFLAFGFVLITFSCHFY. Topologically, residues 477 to 528 are extracellular; it reads DFFNQAEWERSFRDYVLCQANVTIGLPTKKPIPDCEIKNRPSLLVEKINLFA. The cysteines at positions 494 and 511 are disulfide-linked. A glycan (N-linked (GlcNAc...) asparagine) is linked at N497. Residues 529–549 traverse the membrane as a helical segment; the sequence is MFGTGIAMSTWVWTKATLLIW. An interaction with BBS5 and BBS7 region spans residues 542–573; the sequence is TKATLLIWRRTWCRLTGHSDDEPKRIKKSKMI. Residues 550–793 are Cytoplasmic-facing; that stretch reads RRTWCRLTGH…AELLDADSDF (244 aa). A phosphoserine mark is found at S560, S578, and S594. The required for interaction with PRKACA stretch occupies residues 574–657; that stretch reads AKAFSKRREL…TPVPPEEQAN (84 aa). The interval 585-597 is interaction with DLG5; that stretch reads QNPGQELSFSMHT. T597 is modified (phosphothreonine). Phosphoserine is present on residues S599 and S642. 2 positions are modified to phosphothreonine: T644 and T648. Residue S666 is modified to Phosphoserine. The segment covering 674–684 has biased composition (basic residues); it reads GRKKKRRKRKK. Residues 674–702 are disordered; it reads GRKKKRRKRKKEVCPLGPAPELHHSAPVP.

The protein belongs to the G-protein coupled receptor Fz/Smo family. As to quaternary structure, homodimer. Interacts (via C-terminus) with protein kinase A catalytic subunit PRKACA; interacts with free PRKACA subunits and the interaction leads to sequestration of PRKACA at the membrane, preventing PRKACA-mediated phosphorylation of GLI transcription factors. Interacts with ARRB2. Interacts with KIF7. Interacts with BBS5 and BBS7; the interactions are indicative for the association of SMO with the BBsome complex to facilitate ciliary localization of SMO. Interacts with DLG5 and SDCBP. Interacts with GAS8/DRC4. In terms of processing, phosphorylation by GRK kinases is required for interaction with protein kinase A catalytic subunit PRKACA. In embryo, found in the early neural folds and neural tube, pre-somitic mesoderm and somites, developing limb bud, gut, eye, testes, cartilage, muscle, lung, epiglottis, thymus, tongue, jaw, taste buds, teeth, and skin. In adult, found in multiple tissues including heart, brain, liver, lung, skeletal muscle, kidney and testis.

It is found in the cell membrane. The protein resides in the cell projection. It localises to the cilium. G protein-coupled receptor which associates with the patched protein (PTCH) to transduce hedgehog protein signaling. Binding of sonic hedgehog (SHH) to its receptor patched prevents inhibition of smoothened (SMO) by patched. When active, SMO binds to and sequesters protein kinase A catalytic subunit PRKACA at the cell membrane, preventing PRKACA-mediated phosphorylation of GLI transcription factors which releases the GLI proteins from PRKACA-mediated inhibition and allows for transcriptional activation of hedgehog pathway target genes. Required for the accumulation of KIF7, GLI2 and GLI3 in the cilia. Interacts with DLG5 at the ciliary base to induce the accumulation of KIF7 and GLI2 at the ciliary tip for GLI2 activation. The polypeptide is Protein smoothened (Smo) (Rattus norvegicus (Rat)).